The primary structure comprises 611 residues: Aspartate--tRNA(Asp/Asn) ligase (611 aa).

L-aspartate is bound at residue glutamate 177. An aspartate region spans residues 201 to 204 (QLFK). Arginine 223 contacts L-aspartate. Residues 223-225 (RDE) and glutamine 232 contribute to the ATP site. Histidine 461 contacts L-aspartate. Glutamate 499 is a binding site for ATP. L-aspartate is bound at residue arginine 506. ATP is bound at residue 551–554 (GVDR).

This sequence belongs to the class-II aminoacyl-tRNA synthetase family. Type 1 subfamily. In terms of assembly, homodimer.

The protein localises to the cytoplasm. The catalysed reaction is tRNA(Asx) + L-aspartate + ATP = L-aspartyl-tRNA(Asx) + AMP + diphosphate. Functionally, aspartyl-tRNA synthetase with relaxed tRNA specificity since it is able to aspartylate not only its cognate tRNA(Asp) but also tRNA(Asn). Reaction proceeds in two steps: L-aspartate is first activated by ATP to form Asp-AMP and then transferred to the acceptor end of tRNA(Asp/Asn). The protein is Aspartate--tRNA(Asp/Asn) ligase of Synechococcus sp. (strain WH7803).